Consider the following 541-residue polypeptide: MDSRRSLLVLALIFISFLVYQQWQLDKNPPVQTEQTTSITATSDVPASSPSNSQAIADSQTRGRIITLENDVFRLKIDTLGGDVISSELLKYDAELDSKTPFELLKDTKEHIYIAQSGLIGKNGIDTRSGRAQYQIEGDNFKLAEGQESLSVPLLFEKDGVTYQKIFVLKRGSYDLGVDYKIDNQSGQAIEVEPYGQLKHSIVESSGNVAMPTYTGGAYSSSETNYKKYSFADMQDNNLSIDTKAGWVAVLQHYFVSAWIPNQDVNNQLYTITDSKNNVASIGYRGPVVTIPAGSQETITSSLWTGPKLQNQMATVANNLDLTVDYGWAWFIAKPLFWLLTFIQGIVSNWGLAIICVTIVVKAILYPLTKAQYTSMAKMRILQPKMQEMRERFGDDRQRMSQEMMKLYKEEKVNPLGGCLPILLQMPIFIALYWTFLEAVELRHAPFFGWIQDLSAQDPYYILPILMGISMFLLQKMSPTPVTDPTQQKVMNFMPLIFMVFFLWFPSGLVLYWLVSNLITIAQQQLIYRGLEKKGLHSRKK.

A helical membrane pass occupies residues 6–26 (SLLVLALIFISFLVYQQWQLD). The segment at 34–56 (EQTTSITATSDVPASSPSNSQAI) is disordered. 4 consecutive transmembrane segments (helical) span residues 337 to 357 (FWLLTFIQGIVSNWGLAIICV), 416 to 436 (LGGCLPILLQMPIFIALYWTF), 454 to 474 (LSAQDPYYILPILMGISMFLL), and 495 to 515 (PLIFMVFFLWFPSGLVLYWLV).

This sequence belongs to the OXA1/ALB3/YidC family. Type 1 subfamily. Interacts with the Sec translocase complex via SecD. Specifically interacts with transmembrane segments of nascent integral membrane proteins during membrane integration.

It is found in the cell inner membrane. In terms of biological role, required for the insertion and/or proper folding and/or complex formation of integral membrane proteins into the membrane. Involved in integration of membrane proteins that insert both dependently and independently of the Sec translocase complex, as well as at least some lipoproteins. Aids folding of multispanning membrane proteins. The protein is Membrane protein insertase YidC of Haemophilus influenzae (strain PittEE).